We begin with the raw amino-acid sequence, 450 residues long: UDP-N-acetylmuramoylalanine--D-glutamate ligase (450 aa).

Residue 119-125 (GSNGKTT) coordinates ATP.

The protein belongs to the MurCDEF family.

The protein localises to the cytoplasm. The catalysed reaction is UDP-N-acetyl-alpha-D-muramoyl-L-alanine + D-glutamate + ATP = UDP-N-acetyl-alpha-D-muramoyl-L-alanyl-D-glutamate + ADP + phosphate + H(+). It participates in cell wall biogenesis; peptidoglycan biosynthesis. Cell wall formation. Catalyzes the addition of glutamate to the nucleotide precursor UDP-N-acetylmuramoyl-L-alanine (UMA). The polypeptide is UDP-N-acetylmuramoylalanine--D-glutamate ligase (Bacillus cereus (strain G9842)).